A 145-amino-acid polypeptide reads, in one-letter code: Acidic phospholipase A2 1 (145 aa).

A signal peptide spans 1–21 (MYPAHLLVLLAVCVSLLGATA). Positions 22–27 (IPPLPL) are excised as a propeptide. 7 disulfide bridges follow: C38–C98, C54–C144, C56–C72, C71–C125, C78–C118, C87–C111, and C105–C116. Positions 55, 57, and 59 each coordinate Ca(2+). The active site involves H75. D76 contributes to the Ca(2+) binding site. The active site involves D119.

It belongs to the phospholipase A2 family. Group I subfamily. D49 sub-subfamily. Monomer. Ca(2+) serves as cofactor. As to expression, expressed by the venom gland.

Its subcellular location is the secreted. The enzyme catalyses a 1,2-diacyl-sn-glycero-3-phosphocholine + H2O = a 1-acyl-sn-glycero-3-phosphocholine + a fatty acid + H(+). Functionally, PLA2 catalyzes the calcium-dependent hydrolysis of the 2-acyl groups in 3-sn-phosphoglycerides. The sequence is that of Acidic phospholipase A2 1 from Laticauda semifasciata (Black-banded sea krait).